A 1290-amino-acid polypeptide reads, in one-letter code: Period circadian protein homolog 1 (1290 aa).

The segment at 1-134 (MSGPLEGADG…SSEQSARART (134 aa)) is disordered. The interval 1 to 151 (MSGPLEGADG…LRELKLRLPP (151 aa)) is interaction with BTRC. The segment covering 25–38 (VPSPGPPQHRPCPG) has biased composition (pro residues). Low complexity-rich tracts occupy residues 48-57 (NSNGSSGNES) and 64-115 (GASQ…ASSE). Polar residues predominate over residues 116–132 (QDNPSTSGCSSEQSARA). At T121 the chain carries Phosphothreonine; by CSNK1E. A phosphoserine; by CSNK1E mark is found at S122 and S126. Positions 138-147 (LMTALRELKL) match the Nuclear export signal 1 motif. PAS domains lie at 208–275 (ITSE…PSRL) and 348–414 (YEAP…KILQ). A PAC domain is found at 422–465 (HSPIRFCARNGEYVTMDTSWAGFVHPWSRKVAFVLGRHKVRTAP). A Nuclear export signal 2 motif is present at residues 489–498 (LSEQIHRLLL). Disordered regions lie at residues 508–544 (GLCG…PAPV) and 646–698 (TTKR…KEPV). 2 stretches are compositionally biased toward low complexity: residues 517–533 (SPGP…SNGG) and 652–662 (ASSSSYTTSSA). Positions 596-815 (ELEAGSAPVQ…GLDSSSTAPS (220 aa)) are required for phosphorylation by CSNK1E. S661, S663, and S704 each carry phosphoserine. Disordered regions lie at residues 749-772 (GLAP…APDA), 805-874 (RGLD…PPAT), and 938-977 (ALQT…FNSR). Residues 751 to 769 (APGPAPSPAPSPTVAPDPA) are compositionally biased toward pro residues. S815 is modified (phosphoserine). The short motif at 827-843 (APPSRRHHCRSKAKRSR) is the Nuclear localization signal element. Basic residues predominate over residues 830–847 (SRRHHCRSKAKRSRHHQN). A compositionally biased stretch (pro residues) spans 860-874 (SPVPPSTPWPTPPAT). Residues 950 to 961 (ASHSPSPSLPAL) are compositionally biased toward low complexity. Residues S979 and S980 each carry the phosphoserine modification. Positions 982–989 (LQLNLLQL) match the Nuclear export signal 3 motif. Positions 996–1037 (EGAAVAGGPGSSAGPPPPSAEAAEPEARLAEVTESSNQDALS) are disordered. The LXXLL signature appears at 1043-1047 (LELLL). Low complexity predominate over residues 1051–1062 (SRSGTGSAASGS). 2 disordered regions span residues 1051–1098 (SRSG…SKYF) and 1207–1290 (SSTQ…NCTS). The span at 1063 to 1077 (LGSGLGSGSGSGSHE) shows a compositional bias: gly residues. A compositionally biased stretch (low complexity) spans 1078-1095 (GGSTSASITRSSQSSHTS). The interval 1149 to 1290 (SRDMTSVLKQ…ALPTAGNCTS (142 aa)) is CRY binding domain. Residues 1236–1248 (GEQGSSGGGSGEG) are compositionally biased toward gly residues.

As to quaternary structure, homodimer. Component of the circadian core oscillator, which includes the CRY proteins, CLOCK or NPAS2, BMAL1 or BMAL2, CSNK1D and/or CSNK1E, TIMELESS, and the PER proteins. Interacts directly with TIMELESS, PER2, PER3, CRY1 and CRY2. Interacts with BMAL1 and CLOCK. Interacts with GPRASP1. Interacts (phosphorylated) with BTRC and FBXW11; the interactions trigger proteasomal degradation. Interacts with NONO, WDR5 and SFPQ. Interacts with USP2. Interacts with HNF4A. In terms of processing, phosphorylated on serine residues by CSNK1D, CSNK1E and probably also by CSNK1G2. Phosphorylation by CSNK1D or CSNK1E promotes nuclear location of PER proteins as well as ubiquitination and subsequent degradation. May be dephosphorylated by PP1. Ubiquitinated; requires phosphorylation by CSNK1E and interaction with BTRC and FBXW11. Deubiquitinated by USP2. Widely expressed. Expressed in hair follicles (at protein level). Found in heart, brain, placenta, lung, liver, skeletal muscle, pancreas, kidney, spleen, thymus, prostate, testis, ovary and small intestine. Highest level in skeletal muscle.

It is found in the nucleus. It localises to the cytoplasm. In terms of biological role, transcriptional repressor which forms a core component of the circadian clock. The circadian clock, an internal time-keeping system, regulates various physiological processes through the generation of approximately 24 hour circadian rhythms in gene expression, which are translated into rhythms in metabolism and behavior. It is derived from the Latin roots 'circa' (about) and 'diem' (day) and acts as an important regulator of a wide array of physiological functions including metabolism, sleep, body temperature, blood pressure, endocrine, immune, cardiovascular, and renal function. Consists of two major components: the central clock, residing in the suprachiasmatic nucleus (SCN) of the brain, and the peripheral clocks that are present in nearly every tissue and organ system. Both the central and peripheral clocks can be reset by environmental cues, also known as Zeitgebers (German for 'timegivers'). The predominant Zeitgeber for the central clock is light, which is sensed by retina and signals directly to the SCN. The central clock entrains the peripheral clocks through neuronal and hormonal signals, body temperature and feeding-related cues, aligning all clocks with the external light/dark cycle. Circadian rhythms allow an organism to achieve temporal homeostasis with its environment at the molecular level by regulating gene expression to create a peak of protein expression once every 24 hours to control when a particular physiological process is most active with respect to the solar day. Transcription and translation of core clock components (CLOCK, NPAS2, BMAL1, BMAL2, PER1, PER2, PER3, CRY1 and CRY2) plays a critical role in rhythm generation, whereas delays imposed by post-translational modifications (PTMs) are important for determining the period (tau) of the rhythms (tau refers to the period of a rhythm and is the length, in time, of one complete cycle). A diurnal rhythm is synchronized with the day/night cycle, while the ultradian and infradian rhythms have a period shorter and longer than 24 hours, respectively. Disruptions in the circadian rhythms contribute to the pathology of cardiovascular diseases, cancer, metabolic syndromes and aging. A transcription/translation feedback loop (TTFL) forms the core of the molecular circadian clock mechanism. Transcription factors, CLOCK or NPAS2 and BMAL1 or BMAL2, form the positive limb of the feedback loop, act in the form of a heterodimer and activate the transcription of core clock genes and clock-controlled genes (involved in key metabolic processes), harboring E-box elements (5'-CACGTG-3') within their promoters. The core clock genes: PER1/2/3 and CRY1/2 which are transcriptional repressors form the negative limb of the feedback loop and interact with the CLOCK|NPAS2-BMAL1|BMAL2 heterodimer inhibiting its activity and thereby negatively regulating their own expression. This heterodimer also activates nuclear receptors NR1D1/2 and RORA/B/G, which form a second feedback loop and which activate and repress BMAL1 transcription, respectively. Regulates circadian target genes expression at post-transcriptional levels, but may not be required for the repression at transcriptional level. Controls PER2 protein decay. Represses CRY2 preventing its repression on CLOCK/BMAL1 target genes such as FXYD5 and SCNN1A in kidney and PPARA in liver. Besides its involvement in the maintenance of the circadian clock, has an important function in the regulation of several processes. Participates in the repression of glucocorticoid receptor NR3C1/GR-induced transcriptional activity by reducing the association of NR3C1/GR to glucocorticoid response elements (GREs) by BMAL1:CLOCK. Plays a role in the modulation of the neuroinflammatory state via the regulation of inflammatory mediators release, such as CCL2 and IL6. In spinal astrocytes, negatively regulates the MAPK14/p38 and MAPK8/JNK MAPK cascades as well as the subsequent activation of NFkappaB. Coordinately regulates the expression of multiple genes that are involved in the regulation of renal sodium reabsorption. Can act as gene expression activator in a gene and tissue specific manner, in kidney enhances WNK1 and SLC12A3 expression in collaboration with CLOCK. Modulates hair follicle cycling. Represses the CLOCK-BMAL1 induced transcription of BHLHE40/DEC1. In Homo sapiens (Human), this protein is Period circadian protein homolog 1 (PER1).